Here is a 365-residue protein sequence, read N- to C-terminus: Protein RecA (365 aa).

81 to 88 serves as a coordination point for ATP; that stretch reads GPESSGKT.

It belongs to the RecA family.

It is found in the cytoplasm. Functionally, can catalyze the hydrolysis of ATP in the presence of single-stranded DNA, the ATP-dependent uptake of single-stranded DNA by duplex DNA, and the ATP-dependent hybridization of homologous single-stranded DNAs. It interacts with LexA causing its activation and leading to its autocatalytic cleavage. The protein is Protein RecA of Borreliella burgdorferi (strain ATCC 35210 / DSM 4680 / CIP 102532 / B31) (Borrelia burgdorferi).